Reading from the N-terminus, the 205-residue chain is Holliday junction branch migration complex subunit RuvA (205 aa).

The segment at 1 to 63 (MIDFVEGTLS…EDAILLYGFA (63 aa)) is domain I. Positions 64–142 (TRDERDLFRK…GYTPSAILTV (79 aa)) are domain II. A flexible linker region spans residues 143–153 (AAGDLTAGEQA). The interval 153–205 (AVSALNEALDALTALGYSDGELQKIRNTLSEKSKEGDGVEKLIKQGLALLMRG) is domain III.

This sequence belongs to the RuvA family. As to quaternary structure, homotetramer. Forms an RuvA(8)-RuvB(12)-Holliday junction (HJ) complex. HJ DNA is sandwiched between 2 RuvA tetramers; dsDNA enters through RuvA and exits via RuvB. An RuvB hexamer assembles on each DNA strand where it exits the tetramer. Each RuvB hexamer is contacted by two RuvA subunits (via domain III) on 2 adjacent RuvB subunits; this complex drives branch migration. In the full resolvosome a probable DNA-RuvA(4)-RuvB(12)-RuvC(2) complex forms which resolves the HJ.

It is found in the cytoplasm. Its function is as follows. The RuvA-RuvB-RuvC complex processes Holliday junction (HJ) DNA during genetic recombination and DNA repair, while the RuvA-RuvB complex plays an important role in the rescue of blocked DNA replication forks via replication fork reversal (RFR). RuvA specifically binds to HJ cruciform DNA, conferring on it an open structure. The RuvB hexamer acts as an ATP-dependent pump, pulling dsDNA into and through the RuvAB complex. HJ branch migration allows RuvC to scan DNA until it finds its consensus sequence, where it cleaves and resolves the cruciform DNA. In Brevibacillus brevis (strain 47 / JCM 6285 / NBRC 100599), this protein is Holliday junction branch migration complex subunit RuvA.